Reading from the N-terminus, the 315-residue chain is Gamma-hemolysin component C (315 aa).

The N-terminal stretch at 1-29 (MLKNKILATTLSVSLLAPLANPLLENAKA) is a signal peptide.

It belongs to the aerolysin family. As to quaternary structure, toxicity requires sequential binding and synergistic association of a class S and a class F component which form heterooligomeric complexes. HlgC (class S) associates with HlgB (class F) thus forming an CB toxin.

In terms of biological role, toxin that seems to act by forming pores in the membrane of the cell. Has a hemolytic and a leucotoxic activity. This Staphylococcus aureus (strain MRSA252) protein is Gamma-hemolysin component C (hlgC).